Reading from the N-terminus, the 343-residue chain is Phosphate acyltransferase (343 aa).

This sequence belongs to the PlsX family. Homodimer. Probably interacts with PlsY.

The protein localises to the cytoplasm. It catalyses the reaction a fatty acyl-[ACP] + phosphate = an acyl phosphate + holo-[ACP]. It functions in the pathway lipid metabolism; phospholipid metabolism. Its function is as follows. Catalyzes the reversible formation of acyl-phosphate (acyl-PO(4)) from acyl-[acyl-carrier-protein] (acyl-ACP). This enzyme utilizes acyl-ACP as fatty acyl donor, but not acyl-CoA. In Neorickettsia sennetsu (strain ATCC VR-367 / Miyayama) (Ehrlichia sennetsu), this protein is Phosphate acyltransferase.